Here is a 335-residue protein sequence, read N- to C-terminus: Stearoyl-CoA desaturase 5 (335 aa).

The Cytoplasmic portion of the chain corresponds to 1–54 (MPGPAVDAEKVPFRSAKEEIRAGVGVEGSEGGGGGGGRERPGARGHRQDIVWRN). The segment at 24-44 (VGVEGSEGGGGGGGRERPGAR) is disordered. Residues 25 to 36 (GVEGSEGGGGGG) show a composition bias toward gly residues. Asn54 contacts substrate. Residues 55–75 (VFLMSLLHLAAVYSLVLIPKA) form a helical membrane-spanning segment. At 76–77 (QP) the chain is on the lumenal side. Residues 78–98 (LTLLWAYFCFLLTALGVTAGA) form a helical membrane-spanning segment. The Fe cation site is built by His99 and His104. The Histidine box-1 motif lies at 99 to 104 (HRLWSH). Residues 99-198 (HRLWSHRSYK…VVRFQRKYYK (100 aa)) lie on the Cytoplasmic side of the membrane. Residues Asn127, Arg134, and Asp135 each contribute to the substrate site. His136, His139, and His140 together coordinate Fe cation. The short motif at 136–140 (HRVHH) is the Histidine box-2 element. 2 residues coordinate substrate: Arg167 and Lys168. A helical membrane pass occupies residues 199-219 (ITVVLMCFVVPTLVPWYIWGE). Residues 220 to 227 (SLWNSYFL) lie on the Lumenal side of the membrane. A helical transmembrane segment spans residues 228 to 247 (ASILRYTISLNVTWLVNSVA). Trp241 provides a ligand contact to substrate. Positions 248, 277, 280, and 281 each coordinate Fe cation. Over 248-335 (HMYGNRPYDK…RKARTGDGSA (88 aa)) the chain is Cytoplasmic. Positions 277–281 (HNYHH) match the Histidine box-3 motif.

The protein belongs to the fatty acid desaturase type 1 family. May self-associate and form homodimers. Fe(2+) serves as cofactor. Detected in brain.

The protein resides in the endoplasmic reticulum membrane. The catalysed reaction is octadecanoyl-CoA + 2 Fe(II)-[cytochrome b5] + O2 + 2 H(+) = (9Z)-octadecenoyl-CoA + 2 Fe(III)-[cytochrome b5] + 2 H2O. The enzyme catalyses hexadecanoyl-CoA + 2 Fe(II)-[cytochrome b5] + O2 + 2 H(+) = (9Z)-hexadecenoyl-CoA + 2 Fe(III)-[cytochrome b5] + 2 H2O. Its function is as follows. Stearoyl-CoA desaturase that utilizes O(2) and electrons from reduced cytochrome b5 to introduce the first double bond into saturated fatty acyl-CoA substrates. Catalyzes the insertion of a cis double bond at the delta-9 position into fatty acyl-CoA substrates including palmitoyl-CoA and stearoyl-CoA. Gives rise to a mixture of 16:1 and 18:1 unsaturated fatty acids. Involved in neuronal cell proliferation and differentiation through down-regulation of EGFR/AKT/MAPK and Wnt signaling pathways. The chain is Stearoyl-CoA desaturase 5 (SCD5) from Bos taurus (Bovine).